Consider the following 525-residue polypeptide: Histidine-rich glycoprotein (525 aa).

Positions 1 to 18 are cleaved as a signal peptide; that stretch reads MKVLTTALLLVTLQCSHA. Residues 19-122 form the Cystatin 1 domain; sequence LSPTNCDASK…ESQDLSVNGY (104 aa). 5 cysteine pairs are disulfide-bonded: C24/C504, C78/C89, C103/C124, C201/C414, and C216/C239. An interaction with ATP5F1A region spans residues 41 to 84; sequence GRRSGYTFQLLRVSDAHLDRVETATIYYLVLDVVESDCWVLSTK. N-linked (GlcNAc...) asparagine glycans are attached at residues N112 and N123. The 106-residue stretch at 135–240 folds into the Cystatin 2 domain; the sequence is NTKDSPVLVD…TPEYTDLICE (106 aa). S145 carries the phosphoserine modification. A glycan (N-linked (GlcNAc...) asparagine) is linked at N200. The disordered stretch occupies residues 275 to 445; sequence RDHHHTHKTH…GHSRKRGPGK (171 aa). N322 and N330 each carry an N-linked (GlcNAc...) asparagine glycan. 2 stretches are compositionally biased toward basic residues: residues 339-392 and 426-443; these read HGQH…HGHH and QYHR…KRGP. S438 is modified (phosphoserine).

Interacts with THBS1 (via the TSP type I repeats); the interaction blocks the antiangiogenic effect of THBS1 with CD36. Interacts with HPSE; the interaction is enhanced at acidic pH, partially inhibits binding of HPSE to cell surface receptors and modulates its enzymatic activity. Interacts (via the HRR domain) with TMP1; the interaction partially mediates the antiangiogenic properties of HRG. Interacts with kappa and lambda light chains of IgG molecules. Interacts with ATP5F1A; the interaction occurs on the surface of T-cells and alters their cell morphology in concert with CONA. Binds IgG molecules containing kappa and lambda light chains and inhibits the formation of insoluble immunoglobulin complexes. Interacts with F12; the interaction, which is enhanced in the presence of zinc ions and inhibited by heparin-binding to HRG, inhibits factor XII autoactivation and contact-initiated coagulation. Interacts with PLG (via its Kringle domains); the interaction tethers PLG to the cell surface and enhances its activation. Interacts (via the HRR domain) with TPM1; the interaction appears to contribute to the antiangiogenic properties of the HRR domain. Interacts with THBS2; the interaction blocks the antiangiogenic effect of THBS2 with CD36. N-glycosylated. Post-translationally, proteolytic cleavage produces several HRG fragments which are mostly disulfide-linked and, therefore, not released. Cleavage by plasmin is inhibited in the presence of heparin, zinc ions or in an acidic environment. Cleavage reduces binding of HRG to heparan sulfate, but enhances the ability of HRG to bind and tether plasminogen to the cell surface. On platelet activation, releases a 33 kDa antiangiogenic peptide which encompasses the HRR. Also cleaved in the C-terminal by plasmin. As to expression, expressed in liver, blood plasma, serum and in platelets. Also present in fibrin clots, wound fluid from acute wounds and chronic leg ulcers.

It localises to the secreted. Its function is as follows. Plasma glycoprotein that binds a number of ligands such as heme, heparin, heparan sulfate, thrombospondin, plasminogen, and divalent metal ions. Inhibits rosette formation. Acts as an adapter protein and implicated in regulating many processes such as immune complex and pathogen clearance, cell adhesion, angiogenesis, coagulation and fibrinolysis. Mediates clearance of necrotic cells through enhancing the phagocytosis of necrotic cells in a heparan sulfate-dependent pathway. This process can be regulated by the presence of certain HRG ligands such as heparin and zinc ions. Binds to IgG subclasses of immunoglobins containing kappa and lambda light chains with different affinities regulating their clearance and inhibiting the formation of insoluble immune complexes. Tethers plasminogen to the cell surface. Binds T-cells and alters the cell morphology. Modulates angiogenesis by blocking the CD6-mediated antiangiongenic effect of thrombospondins, THBS1 and THBS2. The protein is Histidine-rich glycoprotein (Hrg) of Rattus norvegicus (Rat).